The chain runs to 84 residues: MKTLLLTLVVVTIVCLDLGYTRKCLNTPLPLIYTTCPIGQDKCVKMTIKKLPSKYDVIRGCIDICPKSSADVEVLCCDTNKCNK.

The first 21 residues, 1-21, serve as a signal peptide directing secretion; that stretch reads MKTLLLTLVVVTIVCLDLGYT. Intrachain disulfides connect cysteine 24/cysteine 43, cysteine 36/cysteine 61, cysteine 65/cysteine 76, and cysteine 77/cysteine 82.

It belongs to the three-finger toxin family. Short-chain subfamily. Aminergic toxin sub-subfamily. As to expression, expressed by the venom gland.

It localises to the secreted. Acts as a beta-blocker by binding to beta-1 and beta-2 adrenergic receptors (ADRB1 and ADRB2). It dose-dependently decreases the heart rate (bradycardia), whereas conventional cardiotoxins increases it. At 100 mg/kg, intraperitoneal injection into mice provokes labored breathing, impaired locomotion, lack of response to external stimuli, and death (after 30 minutes). This chain is Beta-cardiotoxin CTX27, found in Ophiophagus hannah (King cobra).